The chain runs to 228 residues: Ribonuclease H (228 aa).

Positions 2–142 constitute an RNase H type-1 domain; it reads GPMRTIVYAD…ADRLATLGRR (141 aa). Mg(2+) contacts are provided by D11, E49, D71, and D134.

The protein belongs to the RNase H family. In terms of assembly, monomer. The cofactor is Mg(2+).

It is found in the cytoplasm. The catalysed reaction is Endonucleolytic cleavage to 5'-phosphomonoester.. Its function is as follows. Endonuclease that specifically degrades the RNA of RNA-DNA hybrids. The chain is Ribonuclease H from Methylorubrum extorquens (strain PA1) (Methylobacterium extorquens).